We begin with the raw amino-acid sequence, 1067 residues long: Zinc finger MIZ domain-containing protein 1 (1067 aa).

The sufficient for transactivation activity; sufficient for interaction with NOTCH1 stretch occupies residues 1 to 120 (MNSMDRHIQQ…HQKSRQSDPP (120 aa)). Residue Lys-91 forms a Glycyl lysine isopeptide (Lys-Gly) (interchain with G-Cter in SUMO2) linkage. Disordered stretches follow at residues 112–141 (QKSR…TLSH) and 327–542 (NSQF…PFPP). The span at 128 to 141 (PLSSMSSMKPTLSH) shows a compositional bias: low complexity. Over residues 413–429 (YGNQQYGPNSQFPTQPG) the composition is skewed to polar residues. Pro residues predominate over residues 431–440 (YPAPNPPRPL). Residues 479-497 (NNTFSGSSYSNYSQGNVNR) are compositionally biased toward low complexity. Residues 510-521 (SPVPGNPTPPMT) show a composition bias toward pro residues. The SP-RING-type zinc finger occupies 727–808 (GEDGVEQTAI…MWGILNAIQH (82 aa)). Cys-758, His-760, Cys-781, and Cys-784 together coordinate Zn(2+). Residues Lys-834 and Lys-843 each participate in a glycyl lysine isopeptide (Lys-Gly) (interchain with G-Cter in SUMO2) cross-link. A transactivation domain region spans residues 837–1067 (PDGIPSKRFK…DDLLSLFENN (231 aa)). Residues 868–879 (GPSPYPLPPPPG) are compositionally biased toward pro residues. The segment at 868–1067 (GPSPYPLPPP…DDLLSLFENN (200 aa)) is disordered. 2 stretches are compositionally biased toward polar residues: residues 881–895 (TNSN…NYQG) and 951–961 (SSDQPHPSIQQ). A compositionally biased stretch (pro residues) spans 981–996 (APPPPPSQPPRQPPQA). The span at 1040 to 1067 (PDELLSYLDPPDLPSNSNDDLLSLFENN) shows a compositional bias: low complexity.

As to quaternary structure, interacts with AR, but not with ESR1, NR3C1, PGR, THRB nor VDR. Interacts with NOTCH1 and RBPJ. Interacts with SMARCA4. Interacts (via SP-RING-type domain) with SMAD3 and SMAD4 (via MH2 domain). In terms of tissue distribution, expressed most abundantly in ovary and, at lower levels, in prostate, spleen and testis. Weak expression, if any, in thymus, small intestine, colon and peripheral blood leukocytes.

The protein resides in the nucleus. It localises to the nucleoplasm. The protein localises to the cytoplasm. Its function is as follows. Acts as a transcriptional coactivator. Increases ligand-dependent transcriptional activity of AR and promotes AR sumoylation. The stimulation of AR activity is dependent upon sumoylation. Also functions as a transcriptional coactivator in the TGF-beta signaling pathway by increasing the activity of the SMAD3/SMAD4 transcriptional complex. Involved in transcriptional activation of a subset of NOTCH1 target genes including MYC. Involved in thymocyte and T cell development. Involved in the regulation of postmitotic positioning of pyramidal neurons in the developing cerebral cortex. This is Zinc finger MIZ domain-containing protein 1 from Homo sapiens (Human).